Here is a 181-residue protein sequence, read N- to C-terminus: Large ribosomal subunit protein uL5 (181 aa).

Belongs to the universal ribosomal protein uL5 family. As to quaternary structure, part of the 50S ribosomal subunit; part of the 5S rRNA/L5/L18/L25 subcomplex. Contacts the 5S rRNA and the P site tRNA. Forms a bridge to the 30S subunit in the 70S ribosome.

Functionally, this is one of the proteins that bind and probably mediate the attachment of the 5S RNA into the large ribosomal subunit, where it forms part of the central protuberance. In the 70S ribosome it contacts protein S13 of the 30S subunit (bridge B1b), connecting the 2 subunits; this bridge is implicated in subunit movement. Contacts the P site tRNA; the 5S rRNA and some of its associated proteins might help stabilize positioning of ribosome-bound tRNAs. The sequence is that of Large ribosomal subunit protein uL5 from Picosynechococcus sp. (strain ATCC 27264 / PCC 7002 / PR-6) (Agmenellum quadruplicatum).